The primary structure comprises 80 residues: Exodeoxyribonuclease 7 small subunit (80 aa).

It belongs to the XseB family. As to quaternary structure, heterooligomer composed of large and small subunits.

The protein resides in the cytoplasm. It carries out the reaction Exonucleolytic cleavage in either 5'- to 3'- or 3'- to 5'-direction to yield nucleoside 5'-phosphates.. Its function is as follows. Bidirectionally degrades single-stranded DNA into large acid-insoluble oligonucleotides, which are then degraded further into small acid-soluble oligonucleotides. The polypeptide is Exodeoxyribonuclease 7 small subunit (Rickettsia typhi (strain ATCC VR-144 / Wilmington)).